The following is a 416-amino-acid chain: uncharacterized protein (416 aa).

Residues 3 to 150 form the N-acetyltransferase domain; that stretch reads LDVRTITPSE…SVYRAGLDAR (148 aa). Residues 83 to 85 and 91 to 96 contribute to the acetyl-CoA site; these read VTV and RRGLLS. Tyr124 serves as the catalytic Proton donor. Phe416 (proton acceptor; via carboxylate) is an active-site residue.

This sequence belongs to the acetyltransferase Eis family. Homohexamer; trimer of dimers.

This is an uncharacterized protein from Streptomyces griseus subsp. griseus (strain JCM 4626 / CBS 651.72 / NBRC 13350 / KCC S-0626 / ISP 5235).